Consider the following 343-residue polypeptide: N6-succino-2-amino-2'-deoxyadenylate synthase (343 aa).

The active-site Proton acceptor is serine 14. ATP contacts are provided by serine 14, threonine 15, glycine 16, lysine 17, and glycine 18. A dGMP-binding site is contributed by serine 14. Serine 14 serves as a coordination point for Mg(2+). Residue asparagine 40 coordinates dGMP. The ATP site is built by glycine 42, histidine 43, and threonine 44. Glycine 42 serves as a coordination point for Mg(2+). DGMP-binding residues include serine 127, threonine 128, and arginine 142. Glutamine 187 serves as a coordination point for ATP. Threonine 202 provides a ligand contact to dGMP. Threonine 263 provides a ligand contact to Mg(2+). Residues threonine 263, valine 264, and arginine 269 each contribute to the L-aspartate site. Positions 294, 297, and 330 each coordinate ATP.

The protein belongs to the Caudovirales PurZ family. It depends on Mg(2+) as a cofactor.

The enzyme catalyses dGMP + L-aspartate + ATP = (2S)-2-amino-2'-deoxyadenylo-succinate + ADP + phosphate + 2 H(+). It functions in the pathway purine metabolism. In terms of biological role, involved in the synthesis of the atypical nucleotide dZTP (2-amino-2'-deoxyadenosine-5'-triphosphate). Catalyzes the condensation of aspartate with deoxyguanylate into dSMP (N6-succino-2-amino-2'-deoxyadenylate), which undergoes defumarylation and phosphorylation respectively by host PurB and guanylate/nucleoside diphosphate kinases to give dZTP. dZTP is integrated into the viral genome instead of adenine by the viral DNA polymerase. This Z-base probably completely replaces adenosine and forms a triple bond to the opposite T-base. The resulting non-standard viral DNA is called Z-genome. The chemically modified DNA is probably harder for the host bacteria to digest with nucleases or restriction enzymes. In Vibrio phage phiVC8, this protein is N6-succino-2-amino-2'-deoxyadenylate synthase.